The chain runs to 873 residues: Zinc fingers and homeoboxes protein 1 (873 aa).

The residue at position 36 (threonine 36) is a Phosphothreonine. The disordered stretch occupies residues 41 to 63 (AKAESVSSDEEVHGSVDSDNQQN). Serine 45, serine 47, and serine 48 each carry phosphoserine. Residues 50-63 (EEVHGSVDSDNQQN) are compositionally biased toward basic and acidic residues. 2 consecutive C2H2-type zinc fingers follow at residues 70–93 (YECK…DSEH) and 102–125 (YVCV…LKYH). Lysine 159 is covalently cross-linked (Glycyl lysine isopeptide (Lys-Gly) (interchain with G-Cter in SUMO2)). The interval 198–247 (VHHNSAEGTSEEKENGVKASQEENAESVSSSALESNTSTSTINRVHPSPA) is disordered. Serine 202 carries the phosphoserine modification. The span at 223–238 (ESVSSSALESNTSTST) shows a compositional bias: low complexity. The interval 272–432 (NSNLLPKVLI…QTNVQKSQVP (161 aa)) is required for dimerization. The tract at residues 272–564 (NSNLLPKVLI…SQQKQSWNPF (293 aa)) is required for interaction with NFYA. Residues 284 to 346 (NSIPTYNAAL…LKHGVSWTPE (63 aa)) constitute a DNA-binding region (homeobox 1). A disordered region spans residues 429-456 (SQVPAAQPATDTKPATAAVPSSPSVRPE). Glycyl lysine isopeptide (Lys-Gly) (interchain with G-Cter in SUMO2) cross-links involve residues lysine 441 and lysine 485. The homeobox 2 DNA-binding region spans 464–526 (SFGIRAKKTK…YNQRNSKSNQ (63 aa)). Disordered stretches follow at residues 541–568 (DSSD…PDFA), 627–668 (DEKI…CKKT), and 731–767 (SSSL…KRMN). Residues 569-630 (PQKFKEKTAE…KTKALKDEKI (62 aa)) constitute a DNA-binding region (homeobox 3). Residue lysine 629 forms a Glycyl lysine isopeptide (Lys-Gly) (interchain with G-Cter in SUMO2) linkage. Serine 648 carries the phosphoserine modification. The segment at residues 660–722 (GTGKICKKTP…YAWKNGNLKW (63 aa)) is a DNA-binding region (homeobox 4). The interval 734–768 (LNGLSSLRRRGRGRPKGRGRGRPRGRPRGGKRMNT) is required for nuclear localization. Basic residues predominate over residues 740-764 (LRRRGRGRPKGRGRGRPRGRPRGGK). Residue serine 774 is modified to Phosphoserine. Positions 777-832 (KFKTGTAILKDYYLKHKFLNEQDLDELVNRSHMGYEQVREWFAERQRRSELGIELF) form a DNA-binding region, homeobox 5. A disordered region spans residues 829–873 (IELFEENEEEDEVVDDQEEDEEETDDSDTWEPPRHVKRKLSKSDD). The segment covering 831–857 (LFEENEEEDEVVDDQEEDEEETDDSDT) has biased composition (acidic residues). The tract at residues 831–873 (LFEENEEEDEVVDDQEEDEEETDDSDTWEPPRHVKRKLSKSDD) is required for repressor activity. Residues 863 to 873 (HVKRKLSKSDD) are compositionally biased toward basic residues.

This sequence belongs to the ZHX family. As to quaternary structure, forms homodimers. Heterodimer (via HD1 domain) with ZHX2 (via HD1 domain). Also forms a heterodimer with ZHX3 which is a prerequisite for repressor activity. Interacts with ATF7IP and NFYA. Interacts (via homeobox domains) with DNMT3B (via PWWP domain). Widely expressed with highest levels in brain.

The protein localises to the nucleus. In terms of biological role, acts as a transcriptional repressor. Increases DNMT3B-mediated repressive transcriptional activity when DNMT3B is tethered to DNA. May link molecule between DNMT3B and other co-repressor proteins. This Mus musculus (Mouse) protein is Zinc fingers and homeoboxes protein 1 (Zhx1).